The following is a 175-amino-acid chain: Large ribosomal subunit protein eL14 (175 aa).

The tract at residues 150–175 is disordered; that stretch reads KAAKMDSTEGAKRRMQKAIAARKAKK. Positions 152–161 are enriched in basic and acidic residues; that stretch reads AKMDSTEGAK. The span at 162–175 shows a compositional bias: basic residues; the sequence is RRMQKAIAARKAKK.

This sequence belongs to the eukaryotic ribosomal protein eL14 family.

In terms of biological role, component of the large ribosomal subunit. The ribosome is a large ribonucleoprotein complex responsible for the synthesis of proteins in the cell. This is Large ribosomal subunit protein eL14 (RPL14) from Leishmania donovani.